A 320-amino-acid polypeptide reads, in one-letter code: ATP-dependent 6-phosphofructokinase (320 aa).

Gly12 serves as a coordination point for ATP. 22–26 (RGVVR) contributes to the ADP binding site. Residues 73–74 (RF) and 103–106 (GDGS) each bind ATP. Asp104 provides a ligand contact to Mg(2+). 126–128 (TID) is a substrate binding site. The active-site Proton acceptor is Asp128. Residue Arg155 participates in ADP binding. Substrate-binding positions include Arg163 and 170-172 (MGR). ADP contacts are provided by residues 186-188 (GCE), Lys212, and 214-216 (KKH). Substrate is bound by residues Glu223, Arg244, and 250-253 (HIQR).

Belongs to the phosphofructokinase type A (PFKA) family. ATP-dependent PFK group I subfamily. Prokaryotic clade 'B1' sub-subfamily. In terms of assembly, homotetramer. The cofactor is Mg(2+).

The protein localises to the cytoplasm. It carries out the reaction beta-D-fructose 6-phosphate + ATP = beta-D-fructose 1,6-bisphosphate + ADP + H(+). It participates in carbohydrate degradation; glycolysis; D-glyceraldehyde 3-phosphate and glycerone phosphate from D-glucose: step 3/4. Its activity is regulated as follows. Allosterically activated by ADP and other diphosphonucleosides, and allosterically inhibited by phosphoenolpyruvate. Its function is as follows. Catalyzes the phosphorylation of D-fructose 6-phosphate to fructose 1,6-bisphosphate by ATP, the first committing step of glycolysis. In Photobacterium profundum (strain SS9), this protein is ATP-dependent 6-phosphofructokinase.